A 173-amino-acid chain; its full sequence is Bifunctional protein PyrR (173 aa).

Positions 93 to 105 (VILVDDVLYTGRT) match the PRPP-binding motif.

The protein belongs to the purine/pyrimidine phosphoribosyltransferase family. PyrR subfamily. In terms of assembly, homodimer and homohexamer; in equilibrium.

The catalysed reaction is UMP + diphosphate = 5-phospho-alpha-D-ribose 1-diphosphate + uracil. Functionally, regulates transcriptional attenuation of the pyrimidine nucleotide (pyr) operon by binding in a uridine-dependent manner to specific sites on pyr mRNA. This disrupts an antiterminator hairpin in the RNA and favors formation of a downstream transcription terminator, leading to a reduced expression of downstream genes. Also displays a weak uracil phosphoribosyltransferase activity which is not physiologically significant. The sequence is that of Bifunctional protein PyrR from Streptococcus thermophilus (strain CNRZ 1066).